The primary structure comprises 256 residues: Ribonuclease 3 (256 aa).

One can recognise an RNase III domain in the interval 3-125 (LDALQQRLGY…IVGAVFLDAG (123 aa)). Glutamate 38 lines the Mg(2+) pocket. Aspartate 42 is a catalytic residue. The Mg(2+) site is built by aspartate 111 and glutamate 114. The active site involves glutamate 114. The DRBM domain maps to 152–222 (DAKTLLQEYL…AKLALDEVQK (71 aa)). The tract at residues 229-256 (KRSRAERTGKTRKQPVPPDPQLSLRLKE) is disordered.

It belongs to the ribonuclease III family. As to quaternary structure, homodimer. The cofactor is Mg(2+).

It is found in the cytoplasm. The catalysed reaction is Endonucleolytic cleavage to 5'-phosphomonoester.. Functionally, digests double-stranded RNA. Involved in the processing of primary rRNA transcript to yield the immediate precursors to the large and small rRNAs (23S and 16S). Processes some mRNAs, and tRNAs when they are encoded in the rRNA operon. Processes pre-crRNA and tracrRNA of type II CRISPR loci if present in the organism. This Cupriavidus pinatubonensis (strain JMP 134 / LMG 1197) (Cupriavidus necator (strain JMP 134)) protein is Ribonuclease 3.